We begin with the raw amino-acid sequence, 1267 residues long: Ankyrin repeat and ELMO domain-containing protein D (1267 aa).

The 160-residue stretch at 307–466 folds into the ELMO domain; sequence SHQRLLETLW…FVSGLASEVL (160 aa). The segment covering 486 to 496 has biased composition (basic and acidic residues); the sequence is KKKEKKSEKRG. Positions 486 to 598 are disordered; it reads KKKEKKSEKR…NNHILNNNHL (113 aa). Positions 507–598 are enriched in low complexity; sequence GSNGNINSTT…NNHILNNNHL (92 aa). 4 ANK repeats span residues 655–685, 689–718, 767–796, and 801–830; these read DGNSPLHSAIMNSMTLDCITNGININLFLNT, QGLTPLNLACSISPYLIIDFFLQQDTDPFI, TLETPLSTAIQSGNEDSVGHLLTLCPNINN, and SGQNALHIAISKRNLHIITCLIQNGADPSI. Disordered stretches follow at residues 854 to 908, 924 to 1040, 1057 to 1082, and 1103 to 1215; these read NPTK…NSTS, TSIN…SPIF, SPTQESPQVISTPTSPPYLSNNNGAE, and ENLT…PPKD. 3 stretches are compositionally biased toward low complexity: residues 859-870, 895-908, and 924-1033; these read SRSTSSTSSSTS, ITNNNSIQYSNSTS, and TSIN…STSP. Residues 1057-1080 show a composition bias toward polar residues; it reads SPTQESPQVISTPTSPPYLSNNNG. Low complexity-rich tracts occupy residues 1108–1176 and 1184–1213; these read NSGN…IGSH and HNGPINNGNYPNYRGNNITTSPVGVTVTPP.

In Dictyostelium discoideum (Social amoeba), this protein is Ankyrin repeat and ELMO domain-containing protein D (elmoD).